The sequence spans 648 residues: Biosynthetic arginine decarboxylase (648 aa).

An N6-(pyridoxal phosphate)lysine modification is found at Lys-109. Position 291 to 301 (291 to 301 (LDVGGGLGVDY)) interacts with substrate.

Belongs to the Orn/Lys/Arg decarboxylase class-II family. SpeA subfamily. The cofactor is Mg(2+). Requires pyridoxal 5'-phosphate as cofactor.

It carries out the reaction L-arginine + H(+) = agmatine + CO2. In terms of biological role, catalyzes the biosynthesis of agmatine from arginine. In Prochlorococcus marinus (strain MIT 9313), this protein is Biosynthetic arginine decarboxylase.